Reading from the N-terminus, the 479-residue chain is UDP-N-acetylmuramoylalanine--D-glutamate ligase (479 aa).

ATP is bound at residue 110–116; sequence GTNGKTS.

Belongs to the MurCDEF family.

Its subcellular location is the cytoplasm. The catalysed reaction is UDP-N-acetyl-alpha-D-muramoyl-L-alanine + D-glutamate + ATP = UDP-N-acetyl-alpha-D-muramoyl-L-alanyl-D-glutamate + ADP + phosphate + H(+). It participates in cell wall biogenesis; peptidoglycan biosynthesis. Its function is as follows. Cell wall formation. Catalyzes the addition of glutamate to the nucleotide precursor UDP-N-acetylmuramoyl-L-alanine (UMA). The chain is UDP-N-acetylmuramoylalanine--D-glutamate ligase from Bifidobacterium adolescentis (strain ATCC 15703 / DSM 20083 / NCTC 11814 / E194a).